A 492-amino-acid polypeptide reads, in one-letter code: MSTATHKLLKGATGDWEMVIGMEIHAQVTSNSKLFSGASTAFGGEPNSHVSLVDVAMPGMLPVINEECVRQAVRTGLGLNAKINLRSVFDRKNYFYPDLPQGYQISQYKSPVVGEGEVLVELDGGRSVTVGIERLHIEQDPGKMLHDQSPSLSLIDFNRCGVALMEIVSKPDIRDAEQAKAYVTKLRSIMRYLGTCDGDMEKGNLRADVNVSVRKPGGPLGTRCEIKNMNSINFIGQAIEYEARRQIEILEDGGQIEQETRRFDPDKGETRSMRSKEEAHDYRYFPDPDLLPLEFSQEFVDELKAKLPELPDQKKTRFVADFGLSAYDASVLVAERESAVFYETVLDKLGDRARDGKMAANWVINELFGRLNKEGRDITGSPVTAEQLAAIIDLIGEGTISGKIAKDLFEIVWQEGGDPRALVESRGMKQVTDLSAIEKVVDDIIAANPDKAAQVKDKPQSLGWFVGQVMKASGGKANPQSVNELLKSKLGI.

The protein belongs to the GatB/GatE family. GatB subfamily. In terms of assembly, heterotrimer of A, B and C subunits.

The enzyme catalyses L-glutamyl-tRNA(Gln) + L-glutamine + ATP + H2O = L-glutaminyl-tRNA(Gln) + L-glutamate + ADP + phosphate + H(+). It carries out the reaction L-aspartyl-tRNA(Asn) + L-glutamine + ATP + H2O = L-asparaginyl-tRNA(Asn) + L-glutamate + ADP + phosphate + 2 H(+). Functionally, allows the formation of correctly charged Asn-tRNA(Asn) or Gln-tRNA(Gln) through the transamidation of misacylated Asp-tRNA(Asn) or Glu-tRNA(Gln) in organisms which lack either or both of asparaginyl-tRNA or glutaminyl-tRNA synthetases. The reaction takes place in the presence of glutamine and ATP through an activated phospho-Asp-tRNA(Asn) or phospho-Glu-tRNA(Gln). This is Aspartyl/glutamyl-tRNA(Asn/Gln) amidotransferase subunit B from Bradyrhizobium diazoefficiens (strain JCM 10833 / BCRC 13528 / IAM 13628 / NBRC 14792 / USDA 110).